We begin with the raw amino-acid sequence, 283 residues long: NAD kinase (283 aa).

Asp-67 acts as the Proton acceptor in catalysis. NAD(+) is bound by residues 67–68 (DG), 141–142 (ND), Arg-152, Asp-171, 182–187 (TAYSLS), and Gln-241.

This sequence belongs to the NAD kinase family. A divalent metal cation serves as cofactor.

It is found in the cytoplasm. The catalysed reaction is NAD(+) + ATP = ADP + NADP(+) + H(+). In terms of biological role, involved in the regulation of the intracellular balance of NAD and NADP, and is a key enzyme in the biosynthesis of NADP. Catalyzes specifically the phosphorylation on 2'-hydroxyl of the adenosine moiety of NAD to yield NADP. The sequence is that of NAD kinase from Heliobacterium modesticaldum (strain ATCC 51547 / Ice1).